Reading from the N-terminus, the 612-residue chain is Sulfite reductase [NADPH] hemoprotein beta-component (612 aa).

The tract at residues 1 to 32 (MDDHKPIDTPDGPAVDTPGIGAHRYEAPPTDR) is disordered. [4Fe-4S] cluster-binding residues include Cys469, Cys475, Cys514, and Cys518. Cys518 provides a ligand contact to siroheme.

Belongs to the nitrite and sulfite reductase 4Fe-4S domain family. Alpha(8)-beta(8). The alpha component is a flavoprotein, the beta component is a hemoprotein. Requires siroheme as cofactor. It depends on [4Fe-4S] cluster as a cofactor.

The catalysed reaction is hydrogen sulfide + 3 NADP(+) + 3 H2O = sulfite + 3 NADPH + 4 H(+). It participates in sulfur metabolism; hydrogen sulfide biosynthesis; hydrogen sulfide from sulfite (NADPH route): step 1/1. Functionally, component of the sulfite reductase complex that catalyzes the 6-electron reduction of sulfite to sulfide. This is one of several activities required for the biosynthesis of L-cysteine from sulfate. This chain is Sulfite reductase [NADPH] hemoprotein beta-component, found in Methylorubrum populi (strain ATCC BAA-705 / NCIMB 13946 / BJ001) (Methylobacterium populi).